The chain runs to 342 residues: Anthranilate phosphoribosyltransferase (342 aa).

5-phospho-alpha-D-ribose 1-diphosphate is bound by residues Gly-83, 86-87 (GD), Thr-91, 93-96 (NIST), 111-119 (KHGGRSVSS), and Ser-123. An anthranilate-binding site is contributed by Gly-83. Mg(2+) is bound at residue Ser-95. Arg-169 contacts anthranilate. Positions 228 and 229 each coordinate Mg(2+).

It belongs to the anthranilate phosphoribosyltransferase family. In terms of assembly, homodimer. Mg(2+) serves as cofactor.

It catalyses the reaction N-(5-phospho-beta-D-ribosyl)anthranilate + diphosphate = 5-phospho-alpha-D-ribose 1-diphosphate + anthranilate. The protein operates within amino-acid biosynthesis; L-tryptophan biosynthesis; L-tryptophan from chorismate: step 2/5. Its function is as follows. Catalyzes the transfer of the phosphoribosyl group of 5-phosphorylribose-1-pyrophosphate (PRPP) to anthranilate to yield N-(5'-phosphoribosyl)-anthranilate (PRA). In Laribacter hongkongensis (strain HLHK9), this protein is Anthranilate phosphoribosyltransferase.